Here is a 43-residue protein sequence, read N- to C-terminus: Potassium channel toxin gamma-KTx 4.11 (43 aa).

4 cysteine pairs are disulfide-bonded: cysteine 5/cysteine 23, cysteine 11/cysteine 34, cysteine 20/cysteine 39, and cysteine 24/cysteine 41.

Belongs to the ergtoxin family. Gamma-KTx 4 subfamily. Expressed by the venom gland.

It localises to the secreted. In terms of biological role, reversibly blocks Kv11/ERG potassium channels. This Centruroides noxius (Mexican scorpion) protein is Potassium channel toxin gamma-KTx 4.11.